A 249-amino-acid polypeptide reads, in one-letter code: tRNA (guanine-N(1)-)-methyltransferase (249 aa).

Residues Gly-116 and 136–141 (IGDYIL) contribute to the S-adenosyl-L-methionine site.

This sequence belongs to the RNA methyltransferase TrmD family. As to quaternary structure, homodimer.

It is found in the cytoplasm. It catalyses the reaction guanosine(37) in tRNA + S-adenosyl-L-methionine = N(1)-methylguanosine(37) in tRNA + S-adenosyl-L-homocysteine + H(+). Its function is as follows. Specifically methylates guanosine-37 in various tRNAs. The polypeptide is tRNA (guanine-N(1)-)-methyltransferase (Zymomonas mobilis subsp. mobilis (strain ATCC 31821 / ZM4 / CP4)).